The chain runs to 81 residues: RNA-binding protein Hfq (81 aa).

Positions 11–71 (DIFLNSARKN…VSTITPLRPI (61 aa)) constitute a Sm domain.

This sequence belongs to the Hfq family. Homohexamer.

RNA chaperone that binds small regulatory RNA (sRNAs) and mRNAs to facilitate mRNA translational regulation in response to envelope stress, environmental stress and changes in metabolite concentrations. Also binds with high specificity to tRNAs. The polypeptide is RNA-binding protein Hfq (Clostridium acetobutylicum (strain ATCC 824 / DSM 792 / JCM 1419 / IAM 19013 / LMG 5710 / NBRC 13948 / NRRL B-527 / VKM B-1787 / 2291 / W)).